A 360-amino-acid chain; its full sequence is MSKYNFCAGPAMLPPAVMKKAQQEFIDWQGLGVSVMEMSHRSKEFLALTKKCEASLRRLMNISDEFEVLFMHGGGRGQFSAVPLNLHQENKSAVYCENGVWSKSATDEANKFTQTTAIDVRNDTDGQFSIKAVADWQLPADASYIHYCPNETVDGLEIFDVPSHPTAPIIADMSSTILSREIDVNQFDLIYAGAQKNIGPSGIAIVIVRKTLLAREGLPKPGILDYALEAKQGSMFNTPPTFAWYLAAEVFQWLEQNGGVKAMEAQNIAKAELLYNFIDNSDFYSNKVAKHSRSRMNVPFWLNDESLNSKFVAQSNEAGLLALEGHRIVGGMRASIYNAMPLEGVQALVDFMAAFAKENS.

Residue R41 coordinates L-glutamate. Pyridoxal 5'-phosphate contacts are provided by residues 75–76 (GR), W101, T152, D172, and Q195. K196 carries the post-translational modification N6-(pyridoxal phosphate)lysine. 237–238 (NT) provides a ligand contact to pyridoxal 5'-phosphate.

Belongs to the class-V pyridoxal-phosphate-dependent aminotransferase family. SerC subfamily. Homodimer. It depends on pyridoxal 5'-phosphate as a cofactor.

The protein localises to the cytoplasm. It catalyses the reaction O-phospho-L-serine + 2-oxoglutarate = 3-phosphooxypyruvate + L-glutamate. The enzyme catalyses 4-(phosphooxy)-L-threonine + 2-oxoglutarate = (R)-3-hydroxy-2-oxo-4-phosphooxybutanoate + L-glutamate. The protein operates within amino-acid biosynthesis; L-serine biosynthesis; L-serine from 3-phospho-D-glycerate: step 2/3. It functions in the pathway cofactor biosynthesis; pyridoxine 5'-phosphate biosynthesis; pyridoxine 5'-phosphate from D-erythrose 4-phosphate: step 3/5. Catalyzes the reversible conversion of 3-phosphohydroxypyruvate to phosphoserine and of 3-hydroxy-2-oxo-4-phosphonooxybutanoate to phosphohydroxythreonine. The polypeptide is Phosphoserine aminotransferase (Pseudoalteromonas translucida (strain TAC 125)).